A 268-amino-acid chain; its full sequence is Syntaxin-22 (268 aa).

The interval 1 to 23 is disordered; that stretch reads MSFQDLESGRGRSTRKFNGGRQD. An N-acetylserine modification is found at Ser-2. Over 2–246 the chain is Cytoplasmic; it reads SFQDLESGRG…AAKTQKSNSS (245 aa). A t-SNARE coiled-coil homology domain is found at 175-237; that stretch reads EAVIEEREQG…SQGKSQLVQA (63 aa). A helical; Anchor for type IV membrane protein transmembrane segment spans residues 247–267; it reads LTCLLLVIFGIVLLIVIIVLA. Ala-268 is a topological domain (vesicular).

It belongs to the syntaxin family. As to quaternary structure, interacts with VTI11 and SYP51 to form a t-SNARE complex, but not with VPS45. Expressed in roots, leaves, stems, flower and green siliques.

The protein resides in the prevacuolar compartment membrane. Its subcellular location is the vacuole membrane. Its function is as follows. May provide the t-SNARE function in the vacuolar assembly. Promotes the formation of vacuolar membrane 'bulbs'. Required for inflorescence stem gravitropism. The polypeptide is Syntaxin-22 (SYP22) (Arabidopsis thaliana (Mouse-ear cress)).